Here is a 154-residue protein sequence, read N- to C-terminus: Ribonuclease H (154 aa).

Positions 1 to 142 constitute an RNase H type-1 domain; that stretch reads MTKQVEIFTD…CDELARQGAN (142 aa). Residues Asp10, Glu48, Asp70, and Asp134 each coordinate Mg(2+).

This sequence belongs to the RNase H family. Monomer. Mg(2+) is required as a cofactor.

The protein resides in the cytoplasm. It catalyses the reaction Endonucleolytic cleavage to 5'-phosphomonoester.. Functionally, endonuclease that specifically degrades the RNA of RNA-DNA hybrids. The polypeptide is Ribonuclease H (Yersinia pestis bv. Antiqua (strain Antiqua)).